The primary structure comprises 172 residues: Disulfide bond formation protein B (172 aa).

Over 1–11 (MNPFRWSFRAQ) the chain is Cytoplasmic. Residues 12 to 28 (FLLGFLACAGLLAYAIY) traverse the membrane as a helical segment. Over 29-46 (VQLHLGLEPCPLCIFQRI) the chain is Periplasmic. The cysteines at positions 38 and 41 are disulfide-linked. The chain crosses the membrane as a helical span at residues 47–63 (AFAALAMFFLLGALHGP). The Cytoplasmic segment spans residues 64-70 (RAAAGRK). A helical membrane pass occupies residues 71–88 (VYGVLSFIAAGVGMGIAA). Topologically, residues 89–145 (RHVWVQIRPKDMMSSCGPPLSFLSETMGPFEVFRTVLTGTGDCGNIDWRFLGLSMPM) are periplasmic. Cysteines 104 and 131 form a disulfide. Residues 146–164 (WSMVWFVGLALWALYAGFK) form a helical membrane-spanning segment. The Cytoplasmic portion of the chain corresponds to 165-172 (ARRSSVHH).

The protein belongs to the DsbB family.

The protein localises to the cell inner membrane. Functionally, required for disulfide bond formation in some periplasmic proteins. Acts by oxidizing the DsbA protein. This Xanthomonas euvesicatoria pv. vesicatoria (strain 85-10) (Xanthomonas campestris pv. vesicatoria) protein is Disulfide bond formation protein B.